The following is a 238-amino-acid chain: Probable transcriptional regulatory protein YcdB (238 aa).

The protein belongs to the TACO1 family. YeeN subfamily.

The protein localises to the cytoplasm. This is Probable transcriptional regulatory protein YcdB (ycdB) from Lactococcus lactis subsp. lactis (strain IL1403) (Streptococcus lactis).